The following is a 590-amino-acid chain: Transcription factor GTE7 (590 aa).

The interval 125–160 is disordered; it reads LNNFTGEKNDLGPKKKKQKKNVSGLKRSNQFGPSDP. The 107-residue stretch at 164-270 folds into the Bromo domain; sequence KLLAGMLNTC…DHFDGMFNPA (107 aa). 2 disordered regions span residues 282-400 and 476-590; these read TGSS…KDPN and RQGF…EAQC. Positions 288-298 are enriched in basic and acidic residues; it reads PEPDFKPDFKQ. Residues 347–369 are compositionally biased toward pro residues; it reads PSPPPPPPVIQPELPQPQPPPPQ. Residues 394 to 475 enclose the NET domain; the sequence is PKAKDPNKRL…NYKKMASKIK (82 aa). Basic and acidic residues predominate over residues 498–508; it reads SAEKRTRRGDA. A compositionally biased stretch (acidic residues) spans 509-521; sequence GEEDVDIGEDIPI. Over residues 537-562 the composition is skewed to low complexity; it reads AAAASSGSSSSGSSSSSGGSSSSSDS.

The protein localises to the nucleus. In Arabidopsis thaliana (Mouse-ear cress), this protein is Transcription factor GTE7 (GTE7).